A 150-amino-acid polypeptide reads, in one-letter code: Large ribosomal subunit protein bL9 (150 aa).

It belongs to the bacterial ribosomal protein bL9 family.

Functionally, binds to the 23S rRNA. This chain is Large ribosomal subunit protein bL9, found in Ruthia magnifica subsp. Calyptogena magnifica.